Consider the following 565-residue polypeptide: Thiol:disulfide interchange protein DsbD (565 aa).

An N-terminal signal peptide occupies residues 1 to 19 (MAQRIFTLILLLCSTSVFA). Disulfide bonds link Cys122–Cys128 and Cys182–Cys304. 7 helical membrane passes run 163–183 (LPFS…TPCV), 208–228 (LLTF…GLVV), 243–263 (YVLI…FGLF), 296–316 (IAGL…LLYI), 323–343 (WLGG…LMLI), 365–385 (FGFV…GDIW), and 386–406 (GLRL…ITSL). The Thioredoxin domain occupies 434-565 (WAFGATHTAQ…FSAHLRDRQP (132 aa)). Cys480 and Cys483 are joined by a disulfide.

It belongs to the thioredoxin family. DsbD subfamily.

It is found in the cell inner membrane. It catalyses the reaction [protein]-dithiol + NAD(+) = [protein]-disulfide + NADH + H(+). The enzyme catalyses [protein]-dithiol + NADP(+) = [protein]-disulfide + NADPH + H(+). Its function is as follows. Required to facilitate the formation of correct disulfide bonds in some periplasmic proteins and for the assembly of the periplasmic c-type cytochromes. Acts by transferring electrons from cytoplasmic thioredoxin to the periplasm. This transfer involves a cascade of disulfide bond formation and reduction steps. The polypeptide is Thiol:disulfide interchange protein DsbD (Shigella dysenteriae serotype 1 (strain Sd197)).